The following is a 109-amino-acid chain: B melanoma antigen 3 (109 aa).

The signal sequence occupies residues 1-17 (MAAGVVFLALSAQLLQA).

Belongs to the BAGE family. Not expressed in normal tissues except in testis. Expressed in melanoma, bladder and lung carcinomas.

It is found in the secreted. Unknown. Candidate gene encoding tumor antigens. The sequence is that of B melanoma antigen 3 (BAGE3) from Homo sapiens (Human).